The chain runs to 120 residues: Inner membrane protein YidG (120 aa).

Topologically, residues Met1–Ser21 are cytoplasmic. A helical membrane pass occupies residues Leu22 to Ile39. Residues Lys40–Met48 are Periplasmic-facing. The helical transmembrane segment at Leu49–Thr68 threads the bilayer. Over Arg69 to Lys90 the chain is Cytoplasmic. The helical transmembrane segment at Phe91–Ile113 threads the bilayer. Residues Val114–Ala120 lie on the Periplasmic side of the membrane.

The protein resides in the cell inner membrane. The chain is Inner membrane protein YidG (yidG) from Escherichia coli O157:H7.